We begin with the raw amino-acid sequence, 337 residues long: MIQKNWQELIKPNKVDFITHGSRTHATVVAEPLERGFGLTLGNALRRVLLSSLRGAAVTAVQIDGVLHEFSSIPGVREDVTDIVLNIKEIAIRMEGEGPKRMVVRKEGPGVVTAGDIQTVGDVEILNPEHVICTLDEGAEIRMEFTVNTGKGYVPADRNRAEDAPIGLIPVDSLYSPVRKVSYKIENTREGQVLDYDKLTLNIETNGSVTGEDAVAYAARILQDQLSIFVNFEEPQKEAPQEQVAELAFNPALLKKVDELELSVRSANCLKNDNIVYIGDLIQKTEAEMLRTPNFGRKSLNEIKEVLASMGLHLGMEIPAWPPENIEDLAKRYEDQY.

The alpha N-terminal domain (alpha-NTD) stretch occupies residues 1–233 (MIQKNWQELI…DQLSIFVNFE (233 aa)). The interval 249 to 337 (FNPALLKKVD…DLAKRYEDQY (89 aa)) is alpha C-terminal domain (alpha-CTD).

The protein belongs to the RNA polymerase alpha chain family. In terms of assembly, homodimer. The RNAP catalytic core consists of 2 alpha, 1 beta, 1 beta' and 1 omega subunit. When a sigma factor is associated with the core the holoenzyme is formed, which can initiate transcription.

The catalysed reaction is RNA(n) + a ribonucleoside 5'-triphosphate = RNA(n+1) + diphosphate. DNA-dependent RNA polymerase catalyzes the transcription of DNA into RNA using the four ribonucleoside triphosphates as substrates. This is DNA-directed RNA polymerase subunit alpha from Brucella abortus (strain S19).